A 790-amino-acid polypeptide reads, in one-letter code: Penicillin-binding protein 1A (790 aa).

Topologically, residues 1-6 (MYKSLL) are cytoplasmic. Residues 7 to 27 (FCLKIFVFLILVGCGITAYII) form a helical; Signal-anchor for type II membrane protein membrane-spanning segment. At 28-790 (YHYSRDLPDY…SKEDQSQEIY (763 aa)) the chain is on the periplasmic side. The tract at residues 49 to 220 (TRIYSRDGKL…SELNPERNYA (172 aa)) is transglycosylase. Glu-87 (proton donor; for transglycosylase activity) is an active-site residue. Residues 398–711 (DVIVVEAIKE…SNVVLPIFID (314 aa)) form a transpeptidase region. Catalysis depends on Ser-457, which acts as the Acyl-ester intermediate; for transpeptidase activity.

In the N-terminal section; belongs to the glycosyltransferase 51 family. The protein in the C-terminal section; belongs to the transpeptidase family.

The protein localises to the cell inner membrane. It catalyses the reaction [GlcNAc-(1-&gt;4)-Mur2Ac(oyl-L-Ala-gamma-D-Glu-L-Lys-D-Ala-D-Ala)](n)-di-trans,octa-cis-undecaprenyl diphosphate + beta-D-GlcNAc-(1-&gt;4)-Mur2Ac(oyl-L-Ala-gamma-D-Glu-L-Lys-D-Ala-D-Ala)-di-trans,octa-cis-undecaprenyl diphosphate = [GlcNAc-(1-&gt;4)-Mur2Ac(oyl-L-Ala-gamma-D-Glu-L-Lys-D-Ala-D-Ala)](n+1)-di-trans,octa-cis-undecaprenyl diphosphate + di-trans,octa-cis-undecaprenyl diphosphate + H(+). It carries out the reaction Preferential cleavage: (Ac)2-L-Lys-D-Ala-|-D-Ala. Also transpeptidation of peptidyl-alanyl moieties that are N-acyl substituents of D-alanine.. Its pathway is cell wall biogenesis; peptidoglycan biosynthesis. Functionally, cell wall formation. Synthesis of cross-linked peptidoglycan from the lipid intermediates. The enzyme has a penicillin-insensitive transglycosylase N-terminal domain (formation of linear glycan strands) and a penicillin-sensitive transpeptidase C-terminal domain (cross-linking of the peptide subunits). The protein is Penicillin-binding protein 1A (mrcA) of Rickettsia conorii (strain ATCC VR-613 / Malish 7).